The following is a 204-amino-acid chain: Leucyl/phenylalanyl-tRNA--protein transferase (204 aa).

The protein belongs to the L/F-transferase family.

The protein resides in the cytoplasm. The catalysed reaction is N-terminal L-lysyl-[protein] + L-leucyl-tRNA(Leu) = N-terminal L-leucyl-L-lysyl-[protein] + tRNA(Leu) + H(+). It carries out the reaction N-terminal L-arginyl-[protein] + L-leucyl-tRNA(Leu) = N-terminal L-leucyl-L-arginyl-[protein] + tRNA(Leu) + H(+). It catalyses the reaction L-phenylalanyl-tRNA(Phe) + an N-terminal L-alpha-aminoacyl-[protein] = an N-terminal L-phenylalanyl-L-alpha-aminoacyl-[protein] + tRNA(Phe). Functionally, functions in the N-end rule pathway of protein degradation where it conjugates Leu, Phe and, less efficiently, Met from aminoacyl-tRNAs to the N-termini of proteins containing an N-terminal arginine or lysine. The chain is Leucyl/phenylalanyl-tRNA--protein transferase from Rhizobium leguminosarum bv. trifolii (strain WSM2304).